Here is a 445-residue protein sequence, read N- to C-terminus: V-type proton ATPase subunit H (445 aa).

Belongs to the V-ATPase H subunit family. V-ATPase is a heteromultimeric enzyme composed of a peripheral catalytic V1 complex (components A to H) attached to an integral membrane V0 proton pore complex (components: a, c, c', c'' and d).

Subunit of the peripheral V1 complex of vacuolar ATPase. Subunit H activates the ATPase activity of the enzyme and couples ATPase activity to proton flow. Vacuolar ATPase is responsible for acidifying a variety of intracellular compartments in eukaryotic cells, thus providing most of the energy required for transport processes in the vacuolar system. The chain is V-type proton ATPase subunit H (vatH) from Dictyostelium discoideum (Social amoeba).